A 156-amino-acid chain; its full sequence is Small ribosomal subunit protein uS7 (156 aa).

Belongs to the universal ribosomal protein uS7 family. In terms of assembly, part of the 30S ribosomal subunit. Contacts proteins S9 and S11.

One of the primary rRNA binding proteins, it binds directly to 16S rRNA where it nucleates assembly of the head domain of the 30S subunit. Is located at the subunit interface close to the decoding center, probably blocks exit of the E-site tRNA. In Arthrospira platensis (Spirulina platensis), this protein is Small ribosomal subunit protein uS7.